A 341-amino-acid chain; its full sequence is Phosphate acyltransferase (341 aa).

The protein belongs to the PlsX family. As to quaternary structure, homodimer. Probably interacts with PlsY.

It is found in the cytoplasm. The enzyme catalyses a fatty acyl-[ACP] + phosphate = an acyl phosphate + holo-[ACP]. The protein operates within lipid metabolism; phospholipid metabolism. Functionally, catalyzes the reversible formation of acyl-phosphate (acyl-PO(4)) from acyl-[acyl-carrier-protein] (acyl-ACP). This enzyme utilizes acyl-ACP as fatty acyl donor, but not acyl-CoA. The protein is Phosphate acyltransferase of Aliivibrio fischeri (strain ATCC 700601 / ES114) (Vibrio fischeri).